A 216-amino-acid polypeptide reads, in one-letter code: MVLTIEALKHLWRVDESRVGRTEPLPLDNRHYVNGHPLCDAFTGLAQIQFGLGCFWGAERLFWQLPGVFSTAAGYAGGGVPYPTYREVCSGETGHAEVVLVVYDHTVISFEQLLQTFWESHDPTQGMRQGNDIGTQYRSVIHCTTSEQYAAASASREVYQQQLNTAGYTAITTEILHPAPPFYYAENEHQQYLAKHPNGYCGLGGTGVTCAIRLQV.

C54 is an active-site residue.

This sequence belongs to the MsrA Met sulfoxide reductase family.

It catalyses the reaction L-methionyl-[protein] + [thioredoxin]-disulfide + H2O = L-methionyl-(S)-S-oxide-[protein] + [thioredoxin]-dithiol. It carries out the reaction [thioredoxin]-disulfide + L-methionine + H2O = L-methionine (S)-S-oxide + [thioredoxin]-dithiol. Has an important function as a repair enzyme for proteins that have been inactivated by oxidation. Catalyzes the reversible oxidation-reduction of methionine sulfoxide in proteins to methionine. The chain is Peptide methionine sulfoxide reductase MsrA from Xylella fastidiosa (strain M12).